The following is a 434-amino-acid chain: Putative nuclease OPG089 (434 aa).

The Mg(2+) site is built by Asp-33, Asp-74, Glu-168, Asp-170, Asp-196, and Asp-198.

The protein belongs to the XPG/RAD2 endonuclease family. FEN1 subfamily. The cofactor is Mg(2+).

It is found in the virion. Putative nuclease that seems to be required for double-strand break repair, homologous recombination, and production of full-length viral genomic DNA. This is Putative nuclease OPG089 (OPG089) from Homo sapiens (Human).